Here is a 242-residue protein sequence, read N- to C-terminus: Mediator of RNA polymerase II transcription subunit 19-A (242 aa).

The span at 1-15 (MTEIFSTLFGQNDAQ) shows a compositional bias: polar residues. 2 disordered regions span residues 1 to 33 (MTEI…PPPS) and 171 to 242 (PPKK…NSLR). Positions 171 to 184 (PPKKKSKHKHRHHH) are enriched in basic residues. Positions 193–210 (TRTDPTKKKKKKDNEPER) are enriched in basic and acidic residues. The segment covering 211–223 (RKKKKDKKKKKNR) has biased composition (basic residues). Residues 232 to 242 (TGSQPNSNSLR) are compositionally biased toward polar residues.

The protein belongs to the Mediator complex subunit 19 family. In terms of assembly, component of the Mediator complex.

The protein resides in the nucleus. In terms of biological role, component of the Mediator complex, a coactivator involved in the regulated transcription of nearly all RNA polymerase II-dependent genes. Mediator functions as a bridge to convey information from gene-specific regulatory proteins to the basal RNA polymerase II transcription machinery. Mediator is recruited to promoters by direct interactions with regulatory proteins and serves as a scaffold for the assembly of a functional preinitiation complex with RNA polymerase II and the general transcription factors. This is Mediator of RNA polymerase II transcription subunit 19-A (med19a) from Danio rerio (Zebrafish).